Reading from the N-terminus, the 508-residue chain is Splicing regulatory glutamine/lysine-rich protein 1 (508 aa).

Residues 66–142 (RTVYVGNLNS…RPLKINHSNN (77 aa)) enclose the RRM domain. Phosphoserine occurs at positions 171 and 184. The disordered stretch occupies residues 173–508 (ISAAIEPESG…ENLSTKTEAV (336 aa)). The span at 180–189 (ESGKSNERKG) shows a compositional bias: basic and acidic residues. The span at 190–259 (GRSRSHTRSK…KSRSRSHSRD (70 aa)) shows a compositional bias: basic residues. Over residues 260–355 (KRKDTREKIK…DRSKEIDEKR (96 aa)) the composition is skewed to basic and acidic residues. Threonine 363 carries the post-translational modification Phosphothreonine. A compositionally biased stretch (basic residues) spans 372-388 (RRSRSSSRERRRRRSRS). A compositionally biased stretch (basic and acidic residues) spans 419 to 488 (REKERDHISE…DAPRTEENKI (70 aa)). A compositionally biased stretch (polar residues) spans 489–508 (QHNGNCQLNEENLSTKTEAV). Lysine 504 participates in a covalent cross-link: Glycyl lysine isopeptide (Lys-Gly) (interchain with G-Cter in SUMO2).

The protein belongs to the splicing factor SR family. As to quaternary structure, homodimer. Binds SFRS1, SFRS2, SFRS3 and SFRS6. Interacts with the spliceosome. Interacts with SREK1IP1.

It is found in the nucleus. In terms of biological role, participates in the regulation of alternative splicing by modulating the activity of other splice facors. Inhibits the splicing activity of SFRS1, SFRS2 and SFRS6. Augments the splicing activity of SFRS3. The sequence is that of Splicing regulatory glutamine/lysine-rich protein 1 (SREK1) from Homo sapiens (Human).